Consider the following 133-residue polypeptide: Small ribosomal subunit protein uS8 (133 aa).

It belongs to the universal ribosomal protein uS8 family. In terms of assembly, part of the 30S ribosomal subunit. Contacts proteins S5 and S12.

One of the primary rRNA binding proteins, it binds directly to 16S rRNA central domain where it helps coordinate assembly of the platform of the 30S subunit. This Nostoc punctiforme (strain ATCC 29133 / PCC 73102) protein is Small ribosomal subunit protein uS8.